The primary structure comprises 618 residues: Neurosecretory protein VGF (618 aa).

The signal sequence occupies residues 1–23; sequence MKSLRLPATVLFCLLLLIKGLGA. 3 disordered regions span residues 23–46, 86–201, and 219–262; these read AAPP…PVAG, VLLQ…LESP, and PERA…GEAL. Positions 26–37 are enriched in pro residues; it reads PGHPEAQPPPPS. A compositionally biased stretch (low complexity) spans 180 to 195; sequence ETAAAETETRTHTLTR. Positions 301–332 form a coiled coil; it reads LAQVEAGRRQAEATRQAAAQEERLADLASDLL. Gln-310 carries the pyrrolidone carboxylic acid modification. The segment at 342–603 is disordered; that stretch reads RQRGLGGRGL…EAEERRLQEQ (262 aa). The span at 356–378 shows a compositional bias: basic and acidic residues; it reads GGGRETARQQEEAEQERRGGEER. The span at 379–395 shows a compositional bias: acidic residues; the sequence is VGEEDEEAAEAEAEAEE. The segment covering 416–434 has biased composition (basic and acidic residues); that stretch reads AEDKRSREETPGHRRKEAE. Ser-421 is subject to Phosphoserine. Thr-425 is subject to Phosphothreonine. The segment covering 435–451 has biased composition (acidic residues); the sequence is GAEEGGAEDEDDDEEMD. Residues 490–500 show a composition bias toward pro residues; the sequence is PPEPVPPPRAA. The span at 578–602 shows a compositional bias: basic and acidic residues; that stretch reads HYPDREAQARRAQEEAEAEERRLQE.

Post-translationally, multiple peptides are derived from VGF, with activities in synaptic plasticity, antidepression, penile erection, autonomic activation, and increases in energy expenditure.

The protein resides in the secreted. It is found in the cytoplasmic vesicle. It localises to the secretory vesicle. In terms of biological role, secreted polyprotein that is packaged and proteolytically processed by prohormone convertases PCSK1 and PCSK2 in a cell-type-specific manner. VGF and peptides derived from its processing play many roles in neurogenesis and neuroplasticity associated with learning, memory, depression and chronic pain. Its function is as follows. Plays a role in the control of body fluid homeostasis by regulating vasopressin release. Suppresses presynaptic glutamatergic neurons connected to vasopressin neurons. Plays a role in the control of body fluid homeostasis by regulating vasopressin release. Activates GABAergic interneurons which are inhibitory neurons of the nervous system and thereby suppresses presynaptic glutamatergic neurons. Also stimulates feeding behavior in an orexin-dependent manner in the hypothalamus. Functions as a positive regulator for the activation of orexin neurons resulting in elevated gastric acid secretion and gastric emptying. This chain is Neurosecretory protein VGF, found in Bos taurus (Bovine).